A 182-amino-acid chain; its full sequence is ATP-dependent protease subunit HslV (182 aa).

Residue T6 is part of the active site. Na(+) is bound by residues A164, C167, and T170.

This sequence belongs to the peptidase T1B family. HslV subfamily. A double ring-shaped homohexamer of HslV is capped on each side by a ring-shaped HslU homohexamer. The assembly of the HslU/HslV complex is dependent on binding of ATP.

It is found in the cytoplasm. It catalyses the reaction ATP-dependent cleavage of peptide bonds with broad specificity.. Allosterically activated by HslU binding. Its function is as follows. Protease subunit of a proteasome-like degradation complex believed to be a general protein degrading machinery. This Borreliella burgdorferi (strain ATCC 35210 / DSM 4680 / CIP 102532 / B31) (Borrelia burgdorferi) protein is ATP-dependent protease subunit HslV.